The primary structure comprises 661 residues: Arginine--tRNA ligase, cytoplasmic (661 aa).

Position 1 is an N-acetylmethionine (M1). The could be involved in the assembly of the multisynthetase complex stretch occupies residues 1–73 (MDGLVAQCSA…AEKRRRPTKN (73 aa)). L-arginine contacts are provided by residues 201–203 (SPN), H212, Y385, D389, and Q413. The 'HIGH' region signature appears at 202 to 213 (PNIAKEMHVGHL). An interaction with tRNA region spans residues 530 to 544 (NTAAYLLYAFTRIRS).

The protein belongs to the class-I aminoacyl-tRNA synthetase family. In terms of assembly, interacts (via N-terminus) with AIMP1 (via N-terminus); this stimulates its catalytic activity. Interacts (via N-terminus) with LARS2 (via C-terminus). Monomer. Part of a multisubunit complex that groups tRNA ligases for Arg (RARS1), Asp (DARS1), Gln (QARS1), Ile (IARS1), Leu (LARS1), Lys (KARS1), Met (MARS1) the bifunctional ligase for Glu and Pro (EPRS1) and the auxiliary subunits AIMP1/p43, AIMP2/p38 and EEF1E1/p18. Interacts with QARS1. Part of a complex composed of RARS1, QARS1 and AIMP1.

Its subcellular location is the cytoplasm. It is found in the cytosol. The catalysed reaction is tRNA(Arg) + L-arginine + ATP = L-arginyl-tRNA(Arg) + AMP + diphosphate. Forms part of a macromolecular complex that catalyzes the attachment of specific amino acids to cognate tRNAs during protein synthesis. Modulates the secretion of AIMP1 and may be involved in generation of the inflammatory cytokine EMAP2 from AIMP1. In Cricetulus griseus (Chinese hamster), this protein is Arginine--tRNA ligase, cytoplasmic (RARS1).